An 820-amino-acid polypeptide reads, in one-letter code: Probable beta-glucosidase ARB_05654 (820 aa).

An N-terminal signal peptide occupies residues 1-18 (MLFRWCPLVALAIASGTA). N-linked (GlcNAc...) asparagine glycosylation is found at Asn-62 and Asn-276. The active site involves Asp-304. 7 N-linked (GlcNAc...) asparagine glycosylation sites follow: Asn-339, Asn-346, Asn-465, Asn-547, Asn-566, Asn-588, and Asn-811.

Belongs to the glycosyl hydrolase 3 family.

The protein resides in the secreted. It carries out the reaction Hydrolysis of terminal, non-reducing beta-D-glucosyl residues with release of beta-D-glucose.. Its pathway is glycan metabolism; cellulose degradation. Its function is as follows. Beta-glucosidases are one of a number of cellulolytic enzymes involved in the degradation of cellulosic biomass. Catalyzes the last step releasing glucose from the inhibitory cellobiose. This is Probable beta-glucosidase ARB_05654 from Arthroderma benhamiae (strain ATCC MYA-4681 / CBS 112371) (Trichophyton mentagrophytes).